Here is a 305-residue protein sequence, read N- to C-terminus: Oxygen-dependent coproporphyrinogen-III oxidase (305 aa).

Ser-93 contributes to the substrate binding site. The a divalent metal cation site is built by His-97 and His-107. His-107 functions as the Proton donor in the catalytic mechanism. Asn-109–Arg-111 provides a ligand contact to substrate. A divalent metal cation contacts are provided by His-146 and His-176. The interval Tyr-241–Gly-276 is important for dimerization. Gly-259–Arg-261 lines the substrate pocket.

Belongs to the aerobic coproporphyrinogen-III oxidase family. In terms of assembly, homodimer. A divalent metal cation serves as cofactor.

The protein resides in the cytoplasm. The enzyme catalyses coproporphyrinogen III + O2 + 2 H(+) = protoporphyrinogen IX + 2 CO2 + 2 H2O. It participates in porphyrin-containing compound metabolism; protoporphyrin-IX biosynthesis; protoporphyrinogen-IX from coproporphyrinogen-III (O2 route): step 1/1. Its function is as follows. Involved in the heme biosynthesis. Catalyzes the aerobic oxidative decarboxylation of propionate groups of rings A and B of coproporphyrinogen-III to yield the vinyl groups in protoporphyrinogen-IX. This is Oxygen-dependent coproporphyrinogen-III oxidase from Pseudomonas paraeruginosa (strain DSM 24068 / PA7) (Pseudomonas aeruginosa (strain PA7)).